The following is a 452-amino-acid chain: Phosphatidylinositol N-acetylglucosaminyltransferase GPI3 subunit (452 aa).

Residues 407–427 (LYLLCGIVEYMLFFLLEWLYP) form a helical membrane-spanning segment.

The protein belongs to the glycosyltransferase group 1 family. In terms of assembly, component of the phosphatidylinositol N-acetylglucosaminyltransferase complex composed of at least GPI1, GPI2, GPI3, GPI15, GPI19 and ERI1.

It is found in the endoplasmic reticulum membrane. It catalyses the reaction a 1,2-diacyl-sn-glycero-3-phospho-(1D-myo-inositol) + UDP-N-acetyl-alpha-D-glucosamine = a 6-(N-acetyl-alpha-D-glucosaminyl)-1-(1,2-diacyl-sn-glycero-3-phospho)-1D-myo-inositol + UDP + H(+). It functions in the pathway glycolipid biosynthesis; glycosylphosphatidylinositol-anchor biosynthesis. Inhibited by Ras, probably via the interaction between RAS2 and ERI1. Functionally, catalytic subunit in the complex catalyzing the transfer of N-acetylglucosamine from UDP-N-acetylglucosamine to phosphatidylinositol, the first step of GPI biosynthesis. The sequence is that of Phosphatidylinositol N-acetylglucosaminyltransferase GPI3 subunit (SPT14) from Saccharomyces cerevisiae (strain YJM789) (Baker's yeast).